Reading from the N-terminus, the 197-residue chain is MKDLTERQRKVLLFIEEFIEKNGYPPSVREIARRFRITPRGALLHLIALEKKGYIERKNGKPRALRVSKSIRNKIPLIGEIRAGEKREAIEYLEDYIEIPESFLSSGYDHFLLKVKGESMIEEHICDGDLVLVRRQDWAQNGDIVAAMVDGEVTLKKFYQRGDTVELRPANREMSSMFFKAEKVKILGKVVGVFRKL.

A DNA-binding region (H-T-H motif) is located at residues 28 to 47; that stretch reads VREIARRFRITPRGALLHLI. Residues Ser119 and Lys156 each act as for autocatalytic cleavage activity in the active site.

Belongs to the peptidase S24 family. In terms of assembly, homodimer.

It catalyses the reaction Hydrolysis of Ala-|-Gly bond in repressor LexA.. Represses a number of genes involved in the response to DNA damage (SOS response), including recA and lexA. In the presence of single-stranded DNA, RecA interacts with LexA causing an autocatalytic cleavage which disrupts the DNA-binding part of LexA, leading to derepression of the SOS regulon and eventually DNA repair. In Thermotoga sp. (strain RQ2), this protein is LexA repressor.